A 136-amino-acid chain; its full sequence is MARTKQTARKSTGGKAPRKQLASKAARKSAPSTGGVKKPHRYKPGTVALREIRRYQKSTELLIRKLPFQRLVREIAQDFKSDLRFQSSAIGALQESVESYLVSLFEDTNLCAIHAKRVTIQSKDIQLARRLRGERN.

The segment at 1-43 is disordered; that stretch reads MARTKQTARKSTGGKAPRKQLASKAARKSAPSTGGVKKPHRYK. An N6,N6,N6-trimethyllysine; alternate mark is found at Lys5 and Lys10. Lys5 is modified (N6,N6-dimethyllysine; alternate). At Lys5 the chain carries N6-methyllysine; alternate. Lys10 is modified (N6-acetyllysine; alternate). Phosphoserine is present on Ser11. The residue at position 15 (Lys15) is an N6,N6-dimethyllysine; alternate. An N6-methyllysine; alternate mark is found at Lys15, Lys19, Lys24, Lys28, and Lys37. N6-acetyllysine; alternate occurs at positions 15, 19, 24, 28, and 37. 2 positions are modified to N6,N6,N6-trimethyllysine; alternate: Lys28 and Lys37. An N6,N6-dimethyllysine; alternate mark is found at Lys28 and Lys37. N6-acetyllysine is present on residues Lys57 and Lys65. Residue Lys80 is modified to N6,N6,N6-trimethyllysine; alternate. The residue at position 80 (Lys80) is an N6,N6-dimethyllysine; alternate. Lys80 carries the post-translational modification N6-methyllysine; alternate.

It belongs to the histone H3 family. As to quaternary structure, the nucleosome is a histone octamer containing two molecules each of H2A, H2B, H3 and H4 assembled in one H3-H4 heterotetramer and two H2A-H2B heterodimers. The octamer wraps approximately 147 bp of DNA. Post-translationally, phosphorylated to form H3S10ph. H3S10ph promotes subsequent H3K14ac formation and is required for transcriptional activation through TBP recruitment to the promoters. In terms of processing, mono-, di- and trimethylated by the COMPASS complex to form H3K4me1/2/3. H3K4me activates gene expression by regulating transcription elongation and plays a role in telomere length maintenance. H3K4me enrichment correlates with transcription levels, and occurs in a 5' to 3' gradient with H3K4me3 enrichment at the 5'-end of genes, shifting to H3K4me2 and then H3K4me1. Trimethylated by methyltransferase dim-5 to form H3K9me3. H3K9me3, but not H3K9me2, marks chromatin regions for cytosine methylation. Methylated by set-2 to form H3K36me. H3K36me represses gene expression. Methylated by dot-1 to form H3K79me. H3K79me is required for association of SIR proteins with telomeric regions and for telomeric silencing. The COMPASS-mediated formation of H3K4me2/3 and the dot-1-mediated formation of H3K79me require H2BK123ub1. Acetylation of histone H3 leads to transcriptional activation. H3K14ac formation by gcn-5 is promoted by H3S10ph. H3K14ac can also be formed by esa-1. H3K56ac formation occurs predominantly in newly synthesized H3 molecules during G1, S and G2/M of the cell cycle and may be involved in DNA repair.

The protein localises to the nucleus. It localises to the chromosome. Core component of nucleosome. Nucleosomes wrap and compact DNA into chromatin, limiting DNA accessibility to the cellular machineries which require DNA as a template. Histones thereby play a central role in transcription regulation, DNA repair, DNA replication and chromosomal stability. DNA accessibility is regulated via a complex set of post-translational modifications of histones, also called histone code, and nucleosome remodeling. The polypeptide is Histone H3 (hh3) (Neurospora crassa (strain ATCC 24698 / 74-OR23-1A / CBS 708.71 / DSM 1257 / FGSC 987)).